A 180-amino-acid polypeptide reads, in one-letter code: NAD(P)H-quinone oxidoreductase subunit I, chloroplastic (180 aa).

4Fe-4S ferredoxin-type domains lie at 55–84 (GRIH…VDWR) and 95–124 (LNYS…MTEE). [4Fe-4S] cluster-binding residues include cysteine 64, cysteine 67, cysteine 70, cysteine 74, cysteine 104, cysteine 107, cysteine 110, and cysteine 114.

It belongs to the complex I 23 kDa subunit family. NDH is composed of at least 16 different subunits, 5 of which are encoded in the nucleus. [4Fe-4S] cluster is required as a cofactor.

The protein localises to the plastid. Its subcellular location is the chloroplast thylakoid membrane. The catalysed reaction is a plastoquinone + NADH + (n+1) H(+)(in) = a plastoquinol + NAD(+) + n H(+)(out). It catalyses the reaction a plastoquinone + NADPH + (n+1) H(+)(in) = a plastoquinol + NADP(+) + n H(+)(out). In terms of biological role, NDH shuttles electrons from NAD(P)H:plastoquinone, via FMN and iron-sulfur (Fe-S) centers, to quinones in the photosynthetic chain and possibly in a chloroplast respiratory chain. The immediate electron acceptor for the enzyme in this species is believed to be plastoquinone. Couples the redox reaction to proton translocation, and thus conserves the redox energy in a proton gradient. The protein is NAD(P)H-quinone oxidoreductase subunit I, chloroplastic of Triticum aestivum (Wheat).